Reading from the N-terminus, the 430-residue chain is MFQQLSARLQEAIGRLRGRGRITEEDLKATLREIRRALMDADVNLEVARDFVERVREEALGKQVLESLTPAEVILATVYEALKEALGGEARLPVLKDRNLWFLVGLQGSGKTTTAAKLALYYKGKGRRPLLVAADTQRPAAREQLRLLGEKVGVPVLEVMDGESPESIRRRVEEKARLEARDLILVDTAGRLQIDEPLMGELARLKEVLGPDEVLLVLDAMTGQEALSVARAFDEKVGVTGLVLTKLDGDARGGAALSARHVTGKPIYFAGVSEKPEGLEPFYPERLAGRILGMGDVASLAEKVRAAGLEAEAPKSAKELSLEDFLKQMQNLKRLGPFSEILGLLPGVPQGLKVDEKAIKRLEAIVLSMTPEERKDPRILNGSRRKRIAKGSGTSVQEVNRFIKAFEEMKALMKSLEKKKGRGLMGMFRR.

Residues glycine 105–threonine 112, aspartate 187–arginine 191, and threonine 245–aspartate 248 contribute to the GTP site.

This sequence belongs to the GTP-binding SRP family. SRP54 subfamily. In terms of assembly, part of the signal recognition particle protein translocation system, which is composed of SRP and FtsY.

The protein localises to the cytoplasm. It catalyses the reaction GTP + H2O = GDP + phosphate + H(+). Involved in targeting and insertion of nascent membrane proteins into the cytoplasmic membrane. Binds to the hydrophobic signal sequence of the ribosome-nascent chain (RNC) as it emerges from the ribosomes. The SRP-RNC complex is then targeted to the cytoplasmic membrane where it interacts with the SRP receptor FtsY. This is Signal recognition particle protein from Thermus aquaticus.